Here is a 230-residue protein sequence, read N- to C-terminus: Demethylmenaquinone methyltransferase (230 aa).

S-adenosyl-L-methionine contacts are provided by residues Thr62, Asp80, 100–101 (DG), and Ser117.

The protein belongs to the class I-like SAM-binding methyltransferase superfamily. MenG/UbiE family.

It carries out the reaction a 2-demethylmenaquinol + S-adenosyl-L-methionine = a menaquinol + S-adenosyl-L-homocysteine + H(+). Its pathway is quinol/quinone metabolism; menaquinone biosynthesis; menaquinol from 1,4-dihydroxy-2-naphthoate: step 2/2. Its function is as follows. Methyltransferase required for the conversion of demethylmenaquinol (DMKH2) to menaquinol (MKH2). This Corynebacterium glutamicum (strain ATCC 13032 / DSM 20300 / JCM 1318 / BCRC 11384 / CCUG 27702 / LMG 3730 / NBRC 12168 / NCIMB 10025 / NRRL B-2784 / 534) protein is Demethylmenaquinone methyltransferase.